Here is a 283-residue protein sequence, read N- to C-terminus: Pantothenate synthetase (283 aa).

Residue 30–37 (MGYFHDGH) participates in ATP binding. His-37 acts as the Proton donor in catalysis. (R)-pantoate is bound at residue Gln-61. Gln-61 is a binding site for beta-alanine. 147-150 (GSKD) contacts ATP. A (R)-pantoate-binding site is contributed by Gln-153. ATP-binding positions include Val-176 and 184–187 (MSSR).

The protein belongs to the pantothenate synthetase family. In terms of assembly, homodimer.

It is found in the cytoplasm. It catalyses the reaction (R)-pantoate + beta-alanine + ATP = (R)-pantothenate + AMP + diphosphate + H(+). Its pathway is cofactor biosynthesis; (R)-pantothenate biosynthesis; (R)-pantothenate from (R)-pantoate and beta-alanine: step 1/1. Functionally, catalyzes the condensation of pantoate with beta-alanine in an ATP-dependent reaction via a pantoyl-adenylate intermediate. This chain is Pantothenate synthetase, found in Desulforapulum autotrophicum (strain ATCC 43914 / DSM 3382 / VKM B-1955 / HRM2) (Desulfobacterium autotrophicum).